Here is a 548-residue protein sequence, read N- to C-terminus: Chaperonin GroEL (548 aa).

ATP-binding positions include 30–33 (TLGP), Lys-51, 87–91 (DGTTT), Gly-415, 479–481 (NAA), and Asp-495.

Belongs to the chaperonin (HSP60) family. In terms of assembly, forms a cylinder of 14 subunits composed of two heptameric rings stacked back-to-back. Interacts with the co-chaperonin GroES.

It localises to the cytoplasm. The catalysed reaction is ATP + H2O + a folded polypeptide = ADP + phosphate + an unfolded polypeptide.. Functionally, together with its co-chaperonin GroES, plays an essential role in assisting protein folding. The GroEL-GroES system forms a nano-cage that allows encapsulation of the non-native substrate proteins and provides a physical environment optimized to promote and accelerate protein folding. This is Chaperonin GroEL from Proteus mirabilis (strain HI4320).